The primary structure comprises 316 residues: Lipoyl synthase (316 aa).

The [4Fe-4S] cluster site is built by C66, C71, C77, C92, C96, C99, and S306. Residues 78 to 295 form the Radical SAM core domain; that stretch reads YSQQTATFMV…ADIAKSMGFK (218 aa).

Belongs to the radical SAM superfamily. Lipoyl synthase family. [4Fe-4S] cluster is required as a cofactor.

The protein localises to the cytoplasm. The enzyme catalyses [[Fe-S] cluster scaffold protein carrying a second [4Fe-4S](2+) cluster] + N(6)-octanoyl-L-lysyl-[protein] + 2 oxidized [2Fe-2S]-[ferredoxin] + 2 S-adenosyl-L-methionine + 4 H(+) = [[Fe-S] cluster scaffold protein] + N(6)-[(R)-dihydrolipoyl]-L-lysyl-[protein] + 4 Fe(3+) + 2 hydrogen sulfide + 2 5'-deoxyadenosine + 2 L-methionine + 2 reduced [2Fe-2S]-[ferredoxin]. Its pathway is protein modification; protein lipoylation via endogenous pathway; protein N(6)-(lipoyl)lysine from octanoyl-[acyl-carrier-protein]: step 2/2. In terms of biological role, catalyzes the radical-mediated insertion of two sulfur atoms into the C-6 and C-8 positions of the octanoyl moiety bound to the lipoyl domains of lipoate-dependent enzymes, thereby converting the octanoylated domains into lipoylated derivatives. The polypeptide is Lipoyl synthase (Rhodopirellula baltica (strain DSM 10527 / NCIMB 13988 / SH1)).